A 169-amino-acid chain; its full sequence is Disulfide bond formation protein B (169 aa).

The Cytoplasmic portion of the chain corresponds to 1–8; it reads MRLSVRWV. The chain crosses the membrane as a helical span at residues 9 to 25; that stretch reads FFLGFFLCALMLAIAGY. The Periplasmic portion of the chain corresponds to 26 to 43; that stretch reads FQFVENLEPCPLCILSRV. C35 and C38 are oxidised to a cystine. Residues 44 to 60 traverse the membrane as a helical segment; sequence AVLAIGGVFLVAALHNP. Topologically, residues 61–67 are cytoplasmic; sequence KSWGIKV. Residues 68–84 form a helical membrane-spanning segment; the sequence is YALLGFVVTLIGIGITG. Residues 85–141 are Periplasmic-facing; it reads RHVWLQSLPADQVPACGPGLNFMLDNFPLTETLELVFRGSGECAEVQWSFLGLTIPG. A disulfide bridge connects residues C100 and C127. A helical transmembrane segment spans residues 142–160; the sequence is WTLVAFLFLGVISLWQMGR. At 161–169 the chain is on the cytoplasmic side; that stretch reads TGGGAGKLT.

The protein belongs to the DsbB family.

The protein resides in the cell inner membrane. Required for disulfide bond formation in some periplasmic proteins. Acts by oxidizing the DsbA protein. The protein is Disulfide bond formation protein B of Nitrosococcus oceani (strain ATCC 19707 / BCRC 17464 / JCM 30415 / NCIMB 11848 / C-107).